The following is a 388-amino-acid chain: Na(+)/H(+) antiporter NhaA (388 aa).

Transmembrane regions (helical) follow at residues 13 to 33 (AAGG…ANTP), 36 to 56 (GIYH…LEIA), 59 to 79 (LLLW…GLEV), 95 to 115 (VFPA…YLMF), 125 to 145 (GWAI…ALLG), 154 to 174 (VFLL…IALF), 179 to 199 (VSMA…FMNW), 213 to 233 (LVLW…GVII), 259 to 279 (VAFL…LQGV), 287 to 307 (LLPV…IFTF), 328 to 348 (VFAV…IASL), and 363 to 383 (LGIL…LRMS).

The protein belongs to the NhaA Na(+)/H(+) (TC 2.A.33) antiporter family.

Its subcellular location is the cell inner membrane. The enzyme catalyses Na(+)(in) + 2 H(+)(out) = Na(+)(out) + 2 H(+)(in). Functionally, na(+)/H(+) antiporter that extrudes sodium in exchange for external protons. This is Na(+)/H(+) antiporter NhaA from Serratia proteamaculans (strain 568).